The chain runs to 132 residues: MGLTSQLIPTLVCLLALTSTFVHGHNFNITIKEIIKMLNILTARNDSCMELTVKDVFTAPKNTSDKEIFCRAATVLRQIYTHNCSNRYLRGLYRNLSSMANKTCSMNEIKKSTLKDFLERLKVIMQKKYYRH.

The N-terminal stretch at 1–24 is a signal peptide; it reads MGLTSQLIPTLVCLLALTSTFVHG. N-linked (GlcNAc...) asparagine glycans are attached at residues Asn28, Asn45, Asn62, Asn83, Asn95, and Asn101. 2 disulfide bridges follow: Cys48-Cys84 and Cys70-Cys104.

This sequence belongs to the IL-4/IL-13 family.

The protein localises to the secreted. Its function is as follows. Participates in at least several B-cell activation processes as well as of other cell types. It is a costimulator of DNA-synthesis. It induces the expression of class II MHC molecules on resting B-cells. It enhances both secretion and cell surface expression of IgE and IgG1. It also regulates the expression of the low affinity Fc receptor for IgE (CD23) on both lymphocytes and monocytes. Positively regulates IL31RA expression in macrophages. Stimulates autophagy in dendritic cells by interfering with mTORC1 signaling and through the induction of RUFY4. This Canis lupus familiaris (Dog) protein is Interleukin-4 (IL4).